Consider the following 504-residue polypeptide: Protein DETOXIFICATION 38 (504 aa).

Transmembrane regions (helical) follow at residues 56–76 (LLLRLALPAILVYLINGGMGI), 90–110 (LAAASIGNSSFSLVYALMLGM), 139–159 (IVLALVGFPMTILYTFSYPIL), 170–190 (YMGSLYIAGLIPQIFAYAVYF), 208–228 (ISAAALVLQISLTWITVYAMG), 234–254 (IAYVLTISWWFIVGAQTFYVI), 273–295 (GLWSFFKLSAGSAVMICLELWYT), 316–336 (SICMSISALSFMVSVGFNAAV), 356–376 (TWTATFVSFVISVVEALVVIA), 401–421 (FLAVTIILNGIQPVLSGVAVG), 433–453 (IGCYYIVGIPIGCILGFTFNF), and 457–477 (GIWTGMIGGTLMQTLILLYVT).

It belongs to the multi antimicrobial extrusion (MATE) (TC 2.A.66.1) family.

It is found in the membrane. The protein is Protein DETOXIFICATION 38 of Arabidopsis thaliana (Mouse-ear cress).